We begin with the raw amino-acid sequence, 189 residues long: UPF0301 protein RMA_0049 (189 aa).

It belongs to the UPF0301 (AlgH) family.

This Rickettsia massiliae (strain Mtu5) protein is UPF0301 protein RMA_0049.